Reading from the N-terminus, the 128-residue chain is Sulfurtransferase TusD (128 aa).

Cys78 acts as the Cysteine persulfide intermediate in catalysis.

The protein belongs to the DsrE/TusD family. As to quaternary structure, heterohexamer, formed by a dimer of trimers. The hexameric TusBCD complex contains 2 copies each of TusB, TusC and TusD. The TusBCD complex interacts with TusE.

The protein localises to the cytoplasm. Part of a sulfur-relay system required for 2-thiolation of 5-methylaminomethyl-2-thiouridine (mnm(5)s(2)U) at tRNA wobble positions. Accepts sulfur from TusA and transfers it in turn to TusE. The polypeptide is Sulfurtransferase TusD (Salmonella newport (strain SL254)).